Here is a 574-residue protein sequence, read N- to C-terminus: Proline--tRNA ligase (574 aa).

The protein belongs to the class-II aminoacyl-tRNA synthetase family. ProS type 1 subfamily. As to quaternary structure, homodimer.

Its subcellular location is the cytoplasm. It catalyses the reaction tRNA(Pro) + L-proline + ATP = L-prolyl-tRNA(Pro) + AMP + diphosphate. Functionally, catalyzes the attachment of proline to tRNA(Pro) in a two-step reaction: proline is first activated by ATP to form Pro-AMP and then transferred to the acceptor end of tRNA(Pro). As ProRS can inadvertently accommodate and process non-cognate amino acids such as alanine and cysteine, to avoid such errors it has two additional distinct editing activities against alanine. One activity is designated as 'pretransfer' editing and involves the tRNA(Pro)-independent hydrolysis of activated Ala-AMP. The other activity is designated 'posttransfer' editing and involves deacylation of mischarged Ala-tRNA(Pro). The misacylated Cys-tRNA(Pro) is not edited by ProRS. In Hahella chejuensis (strain KCTC 2396), this protein is Proline--tRNA ligase.